The chain runs to 168 residues: Protein A40 (168 aa).

Over 1-9 (MNKPKTDYA) the chain is Cytoplasmic. The chain crosses the membrane as a helical; Signal-anchor for type II membrane protein span at residues 10 to 30 (GYACCVICGLIVGIIFTATLL). The Extracellular segment spans residues 31–168 (KVVERKLVHT…TTFLSYHYFG (138 aa)). The C-type lectin domain maps to 63-168 (YNNKCIHLST…TTFLSYHYFG (106 aa)).

This sequence belongs to the poxviridae A40 protein family.

The protein localises to the host membrane. The polypeptide is Protein A40 (Homo sapiens (Human)).